Consider the following 1058-residue polypeptide: MPKRKDIQKIMVIGSGPIIIGQAAEFDYAGTQACLALKEEGYKVILVNSNPATIMTDKEIADKIYIEPLTLEFVNRIIRKERPDAILPTLGGQTGLNMAMALSKAGILDDLEIELLGTKLSAIDQAEDRDLFKQLMQELDQPIPESTIVKTVDEAVTFARDIGYPVIVRPAFTLGGTGGGICSSEEELCEITENGLKLSPVTQCLIERSIAGFKEIEYEVMRDSADNALVVCNMENFDPVGIHTGDSIVFAPTQTLSDIENQMLRDASLKIIRALKIEGGCNVQLALDPYSFKYYVIEVNPRVSRSSALASKATGYPIAKLAAKIAVGLTLDEMINPITGTTYAMFEPALDYVVAKIPRFPFDKFEHGERQLGTQMKATGEVMAIGRNLEESLLKACRSLEIGVCHNEMTSLSNISDEELVTKVIKAQDDRLFYLSEAIRRGYSIEELESLTKIDLFFLDKLLHIVEIEQELQMHVDHLESLKKAKRYGFSDQKIAEIWQKDESDIRAMRHSHSLCPVYKMVDTCAAEFDAKTPYFYSTYELENESVQSNKESILVLGSGPIRIGQGVEFDYATVHSVKAIQKAGYEAIIMNSNPETVSTDFSVSDKLYFEPLTFEDVMNVIDLEQPKGVIVQFGGQTAINLAQSLSDAGVTILGTQVEDLDRAEDRDLFEKALKELGIPQPQGQTATNEEEALEAAKKIGFPVLVRPSYVLGGRAMEIVENKEDLREYIRTAVKASPEHPILVDSYIFGKECEVDAISDGKSVLIPGIMEHIERAGVHSGDSMAVYPPQQLSKQIQETIAEYTKRLAIGLNCIGMMNVQFVIKNEQVYVIEVNPRASRTVPFLSKVTGIPMAQIATKLILGQTLKDLGYEDGLYPQSQLVHIKAPVFSFTKLAQVDSLLGPEMKSTGEVMGSDTSLEKALYKAFEANNSHLSEFGQIVFTIADDSKAEALSLARRFKAIGYQIMATQGTAAYFAEQGLSACLVGKIGDAANDIPTLVRHGHVQAIVNTVGIKRTADKDGQMIRSSAIEQGVPLFTALDTAKAMLTVLESRCFNIEAI.

The carboxyphosphate synthetic domain stretch occupies residues 1 to 401 (MPKRKDIQKI…SLLKACRSLE (401 aa)). Positions 129, 169, 175, 176, 208, 210, 215, 241, 242, 243, 284, and 298 each coordinate ATP. Residues 133-327 (KQLMQELDQP…IAKLAAKIAV (195 aa)) form the ATP-grasp 1 domain. 3 residues coordinate Mg(2+): Gln-284, Glu-298, and Asn-300. Residues Gln-284, Glu-298, and Asn-300 each contribute to the Mn(2+) site. The tract at residues 402-546 (IGVCHNEMTS…YSTYELENES (145 aa)) is oligomerization domain. The carbamoyl phosphate synthetic domain stretch occupies residues 547-929 (VQSNKESILV…ALYKAFEANN (383 aa)). The region spanning 671-861 (EKALKELGIP…MAQIATKLIL (191 aa)) is the ATP-grasp 2 domain. 10 residues coordinate ATP: Arg-707, Ser-746, Ile-748, Glu-752, Gly-777, Val-778, His-779, Ser-780, Gln-820, and Glu-832. Residues Gln-820, Glu-832, and Asn-834 each coordinate Mg(2+). Residues Gln-820, Glu-832, and Asn-834 each coordinate Mn(2+). The region spanning 930 to 1058 (SHLSEFGQIV…ESRCFNIEAI (129 aa)) is the MGS-like domain. Residues 930-1058 (SHLSEFGQIV…ESRCFNIEAI (129 aa)) are allosteric domain.

It belongs to the CarB family. In terms of assembly, composed of two chains; the small (or glutamine) chain promotes the hydrolysis of glutamine to ammonia, which is used by the large (or ammonia) chain to synthesize carbamoyl phosphate. Tetramer of heterodimers (alpha,beta)4. The cofactor is Mg(2+). Requires Mn(2+) as cofactor.

The catalysed reaction is hydrogencarbonate + L-glutamine + 2 ATP + H2O = carbamoyl phosphate + L-glutamate + 2 ADP + phosphate + 2 H(+). It catalyses the reaction hydrogencarbonate + NH4(+) + 2 ATP = carbamoyl phosphate + 2 ADP + phosphate + 2 H(+). The protein operates within amino-acid biosynthesis; L-arginine biosynthesis; carbamoyl phosphate from bicarbonate: step 1/1. It functions in the pathway pyrimidine metabolism; UMP biosynthesis via de novo pathway; (S)-dihydroorotate from bicarbonate: step 1/3. Its function is as follows. Large subunit of the glutamine-dependent carbamoyl phosphate synthetase (CPSase). CPSase catalyzes the formation of carbamoyl phosphate from the ammonia moiety of glutamine, carbonate, and phosphate donated by ATP, constituting the first step of 2 biosynthetic pathways, one leading to arginine and/or urea and the other to pyrimidine nucleotides. The large subunit (synthetase) binds the substrates ammonia (free or transferred from glutamine from the small subunit), hydrogencarbonate and ATP and carries out an ATP-coupled ligase reaction, activating hydrogencarbonate by forming carboxy phosphate which reacts with ammonia to form carbamoyl phosphate. The sequence is that of Carbamoyl phosphate synthase large chain from Streptococcus pyogenes serotype M18 (strain MGAS8232).